The sequence spans 492 residues: Argininosuccinate lyase (492 aa).

Belongs to the lyase 1 family. Argininosuccinate lyase subfamily.

The protein localises to the cytoplasm. The catalysed reaction is 2-(N(omega)-L-arginino)succinate = fumarate + L-arginine. It participates in amino-acid biosynthesis; L-arginine biosynthesis; L-arginine from L-ornithine and carbamoyl phosphate: step 3/3. The sequence is that of Argininosuccinate lyase from Methanoculleus marisnigri (strain ATCC 35101 / DSM 1498 / JR1).